The chain runs to 287 residues: Damage-control phosphatase PH1575 (287 aa).

A Subfamily I CxxC motif motif is present at residues cysteine 7–cysteine 10. Positions 156, 157, and 191 each coordinate Mn(2+). Positions glycine 243 to glutamate 246 match the Subfamily I GNFE motif motif. A Subfamily I KC motif motif is present at residues lysine 263–cysteine 264.

It belongs to the damage-control phosphatase family. Nucleotides phosphatase I subfamily. Requires Mn(2+) as cofactor. It depends on Ni(2+) as a cofactor. [2Fe-2S] cluster is required as a cofactor.

Its activity is regulated as follows. Activity is strongly promoted by Co(2+), Ni(2+), Mg(2+), Mn(2+), Ca(2+), Zn(2+) and Cu(2+). Activity is inhibited by EDTA. Metal-dependent phosphatase with probable damage-control functions. Shows phosphatase activity against p-nitrophenyl phosphate (pNPP), but natural substrates have not been identified yet. Low phosphatase activity against 8-oxo nucleotides suggests that it could hydrolyze oxidatively damaged purine nucleotides or their biosynthetic intermediates. The protein is Damage-control phosphatase PH1575 of Pyrococcus horikoshii (strain ATCC 700860 / DSM 12428 / JCM 9974 / NBRC 100139 / OT-3).